The chain runs to 125 residues: Calcitonin receptor-stimulating peptide 1 (125 aa).

A signal peptide spans 1-25 (MGFWKFPPFLVLSILVLYQAGMFHA). Positions 26 to 77 (APFRSVFDGRFDPATLDEEESRLLLAAMVNDYEQMRARESEKAQKTEGSRIQ) are excised as a propeptide. An intrachain disulfide couples cysteine 81 to cysteine 86.

This sequence belongs to the calcitonin family.

The protein resides in the secreted. Its function is as follows. Stimulates cAMP production in porcine kidney cell line LLC-PK1 via the calcitonin receptor (CT) but not via the CT-like (CL) receptor. The polypeptide is Calcitonin receptor-stimulating peptide 1 (CRSP1) (Bos taurus (Bovine)).